A 1538-amino-acid chain; its full sequence is MEPRMESCLAQVLQKDVGKRLQVGQELIDYFSDKQKSADLEHDQTMLDKLVDGLATSWVNSSNYKVVLLGMDILSALVTRLQDRFKAQIGTVLPSLIDRLGDAKDSVREQDQTLLLKIMDQAANPQYVWDRMLGGFKHKNFRTREGICLCLIATLNASGAQTLTLSKIVPHICNLLGDPNSQVRDAAINSLVEIYRHVGERVRADLSKKGLPQSRLNVIFTKFDEVQKSGNMIQSANDKNFDDEDSVDGNRPSSASSTSSKAPPSSRRNVGMGTTRRLGSSTLGSKSSAAKEGAGAVDEEDFIKAFDDVPVVQIYSSRDLEESINKIREILSDDKHDWEQRVNALKKIRSLLLAGAAEYDNFFQHLRLLDGAFKLSAKDLRSQVVREACITLGHLSSVLGNKFDHGAEAIMPTIFNLIPNSAKIMATSGVVAVRLIIRHTHIPRLIPVITSNCTSKSVAVRRRCFEFLDLLLQEWQTHSLERHISVLAETIKKGIHDADSEARIEARKCYWGFHSHFSREAEHLYHTLESSYQKALQSHLKNSDSIVSLPQSDRSSSSSQESLNRPLSAKRSPTGSTTSRASTVSTKSVSTTGSLQRSRSDIDVNAAASAKSKVSSSSGTTPFSSAAALPPGSYASLGRIRTRRQSSGSATNVASTPDNRGRSRAKVVSQSQRSRSANPAGAGSRSSSPGKLLGSGYGGLTGGSSRGPPVTPSSEKRSKIPRSQGCSRETSPNRIGLARSSRIPRPSMSQGCSRDTSRESSRDTSPARGFPPLDRFGLGQPGRIPGSVNAMRVLSTSTDLEAAVADALKKPVRRRYEPYGMYSDDDANSDASSVCSERSYGSRNGGIPHYLRQTEDVAEVLNHCASSNWSERKEGLLGLQNLLKSQRTLSRVELKRLCEIFTRMFADPHSKRVFSMFLETLVDFIIIHKDDLQDWLFVLLTQLLKKMGADLLGSVQAKVQKALDVTRDSFPFDQQFNILMRFIVDQTQTPNLKVKVAILKYIESLARQMDPTDFVNSSETRLAVSRIITWTTEPKSSDVRKAAQIVLISLFELNTPEFTMLLGALPKTFQDGATKLLHNHLKNSSNTSVGSPSNTIGRTPSRHTSSRTSPLTSPTNCSHGGLSPSRLWGWSADGLAKHPPPFSQPNSIPTAPSHKALRRSYSPSMLDYDTENLNSEEIYSSLRGVTEAIEKFSFRSQEDLNEPIKRDGKKECDIVSRDGGAASPATEGRGGSEVEGGRTALDNKTSLLNTQPPRAFPGPRARDYNPYPYSDAINTYDKTALKEAVFDDDMEQLRDVPIDHSDLVADLLKELSNHNERVEERKGALLELLKITREDSLGVWEEHFKTILLLLLETLGDKDHSIRALALRVLREILRNQPARFKNYAELTIMKTLEAHKDSHKEVVRAAEEAASTLASSIHPEQCIKVLCPIIQTADYPINLAAIKMQTKVVERIAKESLLQLLVDIIPGLLQGYDNTESSVRKASVFCLVAIYSVIGEDLKPHLAQLTGSKMKLLNLYIKRAQTTNSNSSSSSDVSTHS.

HEAT repeat units lie at residues 87–124 (AQIGTVLPSLIDRLGDAKDSVREQDQTLLLKIMDQAAN) and 163–200 (LTLSKIVPHICNLLGDPNSQVRDAAINSLVEIYRHVGE). Residues 235 to 292 (SANDKNFDDEDSVDGNRPSSASSTSSKAPPSSRRNVGMGTTRRLGSSTLGSKSSAAKE) are disordered. Ser246 bears the Phosphoserine mark. Positions 251-268 (RPSSASSTSSKAPPSSRR) are enriched in low complexity. HEAT repeat units follow at residues 405-440 (HGAEAIMPTIFNLIPNSAKIMATSGVVAVRLIIRHT) and 441-477 (HIPRLIPVITSNCTSKSVAVRRRCFEFLDLLLQEWQT). The segment at 543–783 (SDSIVSLPQS…DRFGLGQPGR (241 aa)) is disordered. Phosphoserine occurs at positions 545, 548, 558, 559, and 568. Over residues 548-567 (SLPQSDRSSSSSQESLNRPL) the composition is skewed to low complexity. Over residues 574–594 (TGSTTSRASTVSTKSVSTTGS) the composition is skewed to low complexity. At Ser600 the chain carries Phosphoserine. A compositionally biased stretch (low complexity) spans 606 to 628 (AAASAKSKVSSSSGTTPFSSAAA). Residues Ser636, Ser646, Ser647, and Ser649 each carry the phosphoserine modification. Positions 645–658 (QSSGSATNVASTPD) are enriched in polar residues. Thr656 carries the post-translational modification Phosphothreonine. Residues 662–785 (RSRAKVVSQS…FGLGQPGRIP (124 aa)) are interaction with microtubules, MAPRE1 and MAPRE3. Low complexity predominate over residues 673-692 (RSRSANPAGAGSRSSSPGKL). 4 positions are modified to phosphoserine: Ser684, Ser688, Ser695, and Ser705. Gly residues predominate over residues 693-705 (LGSGYGGLTGGSS). Thr711 carries the post-translational modification Phosphothreonine. A Phosphoserine modification is found at Ser714. Residues 724–733 (QGCSRETSPN) show a composition bias toward polar residues. Ser787, Ser797, and Ser823 each carry phosphoserine. One copy of the HEAT 5 repeat lies at 974 to 1011 (QQFNILMRFIVDQTQTPNLKVKVAILKYIESLARQMDP). Disordered stretches follow at residues 1080–1120 (HLKN…CSHG) and 1136–1156 (AKHPPPFSQPNSIPTAPSHKA). Over residues 1082-1097 (KNSSNTSVGSPSNTIG) the composition is skewed to polar residues. A Phosphoserine modification is found at Ser1091. Residues Thr1095 and Thr1099 each carry the phosphothreonine modification. Positions 1106-1115 (SRTSPLTSPT) are enriched in low complexity. The residue at position 1113 (Ser1113) is a Phosphoserine. A phosphoserine mark is found at Ser1196 and Ser1223. A disordered region spans residues 1215 to 1238 (VSRDGGAASPATEGRGGSEVEGGR). Residues 1254–1538 (RAFPGPRARD…SSSSDVSTHS (285 aa)) are interaction with CLIP2. Positions 1254-1538 (RAFPGPRARD…SSSSDVSTHS (285 aa)) are interaction with PHLDB2 and RSN. Residues 1256–1538 (FPGPRARDYN…SSSSDVSTHS (283 aa)) form a localization to kinetochores region. A coiled-coil region spans residues 1299 to 1330 (DHSDLVADLLKELSNHNERVEERKGALLELLK). HEAT repeat units follow at residues 1342–1379 (EHFKTILLLLLETLGDKDHSIRALALRVLREILRNQPA) and 1460–1497 (QLLVDIIPGLLQGYDNTESSVRKASVFCLVAIYSVIGE).

This sequence belongs to the CLASP family. Interacts with CLIP2, ERC1, MAPRE1, MAPRE3, microtubules, PHLDB2 and RSN. The interaction with ERC1 may be mediated by PHLDB2. Interacts with GCC2; recruits CLASP1 to Golgi membranes. Interacts with MACF1. Interacts with mtcl2 and MTCL1.

The protein resides in the cytoplasm. Its subcellular location is the cytoskeleton. The protein localises to the microtubule organizing center. It localises to the centrosome. It is found in the chromosome. The protein resides in the centromere. Its subcellular location is the kinetochore. The protein localises to the spindle. It localises to the golgi apparatus. It is found in the trans-Golgi network. Microtubule plus-end tracking protein that promotes the stabilization of dynamic microtubules. Involved in the nucleation of noncentrosomal microtubules originating from the trans-Golgi network (TGN). Required for the polarization of the cytoplasmic microtubule arrays in migrating cells towards the leading edge of the cell. May act at the cell cortex to enhance the frequency of rescue of depolymerizing microtubules by attaching their plus-ends to cortical platforms composed of ERC1 and PHLDB2. This cortical microtubule stabilizing activity is regulated at least in part by phosphatidylinositol 3-kinase signaling. Also performs a similar stabilizing function at the kinetochore which is essential for the bipolar alignment of chromosomes on the mitotic spindle. This is CLIP-associating protein 1 (CLASP1) from Homo sapiens (Human).